The chain runs to 336 residues: Nuclear envelope-associated protein 1 (336 aa).

A coiled-coil region spans residues C125–K261. The Bipartite nuclear localization signal signature appears at K240–K261. A helical transmembrane segment spans residues F313–L330.

In terms of assembly, forms heteromers with NEAP2 and NEAP3. Interacts with SUN1; SUN2 and bZIP18.

It localises to the nucleus inner membrane. It is found in the nucleus. Its subcellular location is the nucleoplasm. The chain is Nuclear envelope-associated protein 1 from Arabidopsis thaliana (Mouse-ear cress).